The chain runs to 1100 residues: Regulator of nonsense transcripts 1 (1100 aa).

Residues 42 to 53 (SQTQTQGQTQSQ) show a composition bias toward low complexity. The interval 42 to 67 (SQTQTQGQTQSQLDNQVNGPDGVLPN) is disordered. Residues 94–251 (TKDLPVHACS…NKLEELWKEN (158 aa)) form the Upf1 CH-rich domain. Positions 102, 105, 116, 119, 124, 134, 138, 144, 162, 165, 188, and 192 each coordinate Zn(2+). A C3H region spans residues 102–134 (CSYCGIHDPACVVYCNTSKKWFCNGRGNTSGSH). The CC/SHH/C stretch occupies residues 116–144 (CNTSKKWFCNGRGNTSGSHIVNHLVRAKC). A C4 region spans residues 162 to 192 (CYNCGCRNVFLLGFIPAKADSVVVLLCRQPC). ATP is bound by residues Gln-455, 475-479 (GTGKT), Gln-645, Tyr-682, and Glu-813. A disordered region spans residues 978-1065 (LGQVNGPAAG…QPELSQDSYL (88 aa)). A compositionally biased stretch (low complexity) spans 982–993 (NGPAAGRGAPKG). The span at 1012 to 1063 (SGQPNMPNSQASQDLVSQPFSQGPLTQGYITMSQPSQMSQPGLSQPELSQDS) shows a compositional bias: polar residues.

This sequence belongs to the DNA2/NAM7 helicase family.

The protein resides in the cytoplasm. Its subcellular location is the P-body. It is found in the nucleus. It localises to the perinuclear region. Its function is as follows. RNA-dependent helicase and ATPase required for nonsense-mediated decay (NMD) of mRNAs containing premature stop codons. Is recruited to mRNAs upon translation termination and undergoes a cycle of phosphorylation and dephosphorylation; its phosphorylation appears to be a key step in NMD. The formation of an upf1-upf2-upf3 surveillance complex is believed to activate NMD. This chain is Regulator of nonsense transcripts 1, found in Danio rerio (Zebrafish).